A 677-amino-acid polypeptide reads, in one-letter code: UvrABC system protein B (677 aa).

The region spanning 25-412 (DGVNSGREYQ…SGAIIEQVIR (388 aa)) is the Helicase ATP-binding domain. 38-45 (GATGTGKT) provides a ligand contact to ATP. The short motif at 91–114 (YYDYYQPEAYVPVSDTYIAKTSSI) is the Beta-hairpin element. Residues 429-591 (QVEDLLDEIR…IVPMPAGKKA (163 aa)) enclose the Helicase C-terminal domain. Positions 639–674 (PQLIDELETKMKKSAKDLDFENAAKLRDKIHQLRKK) constitute a UVR domain.

The protein belongs to the UvrB family. Forms a heterotetramer with UvrA during the search for lesions. Interacts with UvrC in an incision complex.

It localises to the cytoplasm. Its function is as follows. The UvrABC repair system catalyzes the recognition and processing of DNA lesions. A damage recognition complex composed of 2 UvrA and 2 UvrB subunits scans DNA for abnormalities. Upon binding of the UvrA(2)B(2) complex to a putative damaged site, the DNA wraps around one UvrB monomer. DNA wrap is dependent on ATP binding by UvrB and probably causes local melting of the DNA helix, facilitating insertion of UvrB beta-hairpin between the DNA strands. Then UvrB probes one DNA strand for the presence of a lesion. If a lesion is found the UvrA subunits dissociate and the UvrB-DNA preincision complex is formed. This complex is subsequently bound by UvrC and the second UvrB is released. If no lesion is found, the DNA wraps around the other UvrB subunit that will check the other stand for damage. This Prochlorococcus marinus (strain SARG / CCMP1375 / SS120) protein is UvrABC system protein B.